The following is a 458-amino-acid chain: Protein U54 (458 aa).

N-linked (GlcNAc...) asparagine; by host glycans are attached at residues asparagine 76, asparagine 102, asparagine 281, asparagine 321, asparagine 346, asparagine 434, and asparagine 451.

It belongs to the herpesviridae UL82 family.

In Homo sapiens (Human), this protein is Protein U54 (U54).